A 263-amino-acid polypeptide reads, in one-letter code: Aquaporin Lacbi1:233199 (263 aa).

At 1–17 (MFTLAHHRHAIRKPMAE) the chain is on the cytoplasmic side. Residues 18-38 (FFGVALLVIFGAGAACQVVLS) traverse the membrane as a helical segment. The Extracellular segment spans residues 39–44 (TNPNSF). The helical transmembrane segment at 45–65 (LSINFGWAIGIAMGAWISGSI) threads the bilayer. Over 66-88 (SGGHINPAITIAMATYRGFPWRE) the chain is Cytoplasmic. Residues 71–73 (NPA) carry the NPA 1 motif. Residues 89–109 (VPSYILAQVLGGVVGAALVYA) traverse the membrane as a helical segment. At 110–143 (NYIHAIDVFEGGRHIRTQATASLFATYALPYMTQ) the chain is on the extracellular side. The helical transmembrane segment at 144 to 164 (VSCFFSEFLATAVLAMMVLAL) threads the bilayer. The Cytoplasmic segment spans residues 165–174 (TDNRNGAPTN). A helical membrane pass occupies residues 175–195 (GLSPFALFVLFIGLGASLGME). The Extracellular segment spans residues 196–227 (TAYALNPARDFGPRLFLAMAGYGKALFNYRSQ). An NPA 2 motif is present at residues 201-203 (NPA). A helical transmembrane segment spans residues 228 to 248 (YWLWAPIIAPVLGAQAGGLLY). Residues 249-263 (DTFLYDGDDSPIKWR) are Cytoplasmic-facing.

It belongs to the MIP/aquaporin (TC 1.A.8) family.

The protein resides in the membrane. It catalyses the reaction H2O(in) = H2O(out). Functionally, probable water channel required to facilitate the transport of water across membranes. This is Aquaporin Lacbi1:233199 from Laccaria bicolor (strain S238N-H82 / ATCC MYA-4686) (Bicoloured deceiver).